Here is a 453-residue protein sequence, read N- to C-terminus: Probable glycine dehydrogenase (decarboxylating) subunit 1 (453 aa).

This sequence belongs to the GcvP family. N-terminal subunit subfamily. As to quaternary structure, the glycine cleavage system is composed of four proteins: P, T, L and H. In this organism, the P 'protein' is a heterodimer of two subunits.

It carries out the reaction N(6)-[(R)-lipoyl]-L-lysyl-[glycine-cleavage complex H protein] + glycine + H(+) = N(6)-[(R)-S(8)-aminomethyldihydrolipoyl]-L-lysyl-[glycine-cleavage complex H protein] + CO2. The glycine cleavage system catalyzes the degradation of glycine. The P protein binds the alpha-amino group of glycine through its pyridoxal phosphate cofactor; CO(2) is released and the remaining methylamine moiety is then transferred to the lipoamide cofactor of the H protein. The chain is Probable glycine dehydrogenase (decarboxylating) subunit 1 from Dictyoglomus turgidum (strain DSM 6724 / Z-1310).